The chain runs to 500 residues: Trehalose-6-phosphate synthase (500 aa).

Residue arginine 28 coordinates D-glucose 6-phosphate. 48-49 provides a ligand contact to UDP-alpha-D-glucose; it reads GG. Residues tyrosine 104 and aspartate 158 each contribute to the D-glucose 6-phosphate site. Residues arginine 300 and lysine 305 each contribute to the UDP-alpha-D-glucose site. A D-glucose 6-phosphate-binding site is contributed by arginine 338. 403-407 lines the UDP-alpha-D-glucose pocket; that stretch reads LVAKE.

The protein belongs to the glycosyltransferase 20 family. As to quaternary structure, homotetramer.

The catalysed reaction is ADP-alpha-D-glucose + D-glucose 6-phosphate = alpha,alpha-trehalose 6-phosphate + ADP + H(+). It carries out the reaction CDP-alpha-D-glucose + D-glucose 6-phosphate = alpha,alpha-trehalose 6-phosphate + CDP + H(+). The enzyme catalyses GDP-alpha-D-glucose + D-glucose 6-phosphate = alpha,alpha-trehalose 6-phosphate + GDP + H(+). It catalyses the reaction TDP-alpha-D-glucose + D-glucose 6-phosphate = 5-methyl-UDP + alpha,alpha-trehalose 6-phosphate + H(+). The catalysed reaction is D-glucose 6-phosphate + UDP-alpha-D-glucose = alpha,alpha-trehalose 6-phosphate + UDP + H(+). Its pathway is glycan biosynthesis; trehalose biosynthesis. In terms of biological role, probably involved in the osmoprotection via the biosynthesis of trehalose and in the production of glycogen and alpha-glucan via the TreS-Pep2 branch involved in the biosynthesis of maltose-1-phosphate (M1P). Catalyzes the transfer of glucose from UDP-glucose (UDP-Glc) to D-glucose 6-phosphate (Glc-6-P) to form trehalose-6-phosphate. Probably also able to use ADP-Glc, CDP-Glc, GDP-Glc and TDP-Glc as glucosyl donors. The sequence is that of Trehalose-6-phosphate synthase from Mycobacterium marinum (strain ATCC BAA-535 / M).